A 498-amino-acid chain; its full sequence is Glycerol kinase (498 aa).

Position 14 (Thr14) interacts with ADP. ATP contacts are provided by Thr14, Thr15, and Ser16. Thr14 contributes to the sn-glycerol 3-phosphate binding site. Residue Arg18 participates in ADP binding. Residues Arg84, Glu85, and Tyr136 each coordinate sn-glycerol 3-phosphate. Glycerol is bound by residues Arg84, Glu85, and Tyr136. His232 bears the Phosphohistidine; by HPr mark. Residue Asp246 coordinates sn-glycerol 3-phosphate. The glycerol site is built by Asp246 and Gln247. Positions 268 and 311 each coordinate ADP. Residues Thr268, Gly311, Gln315, and Gly412 each contribute to the ATP site. ADP is bound by residues Gly412 and Asn416.

Belongs to the FGGY kinase family. In terms of assembly, homotetramer and homodimer (in equilibrium). In terms of processing, the phosphoenolpyruvate-dependent sugar phosphotransferase system (PTS), including enzyme I, and histidine-containing protein (HPr) are required for the phosphorylation, which leads to the activation of the enzyme.

The enzyme catalyses glycerol + ATP = sn-glycerol 3-phosphate + ADP + H(+). The protein operates within polyol metabolism; glycerol degradation via glycerol kinase pathway; sn-glycerol 3-phosphate from glycerol: step 1/1. With respect to regulation, activated by phosphorylation and inhibited by fructose 1,6-bisphosphate (FBP). Functionally, key enzyme in the regulation of glycerol uptake and metabolism. Catalyzes the phosphorylation of glycerol to yield sn-glycerol 3-phosphate. The protein is Glycerol kinase of Lactococcus lactis subsp. lactis (strain IL1403) (Streptococcus lactis).